A 318-amino-acid polypeptide reads, in one-letter code: MAGLKRRASQVWPEERVEQEHGLYSLHRMFDIVGTHLTHRDVRVLSFLFVDVIDDHERGLIRNGRDFLLALERQGRCDESNFRQVLQLLRIITRHDLLPYVTLKKRRAVCPDLVDKYLEETSIRYVTPRALSDPEPRPPQPSKTVPPHYPVVCCPTSGSQMCSKRPARGRTTLGSQRKRRKSVTPDPKEKQTCDIRLRVRAEYCQHETALQGNVFSNKQDPLERQFERFNQANTILKSRDLGSIICDIKFSELTYLDAFWRDYINGSLLEALKGVFITDSLKQAVGHEAIKLLVNVDEEDYELGRQKLLRNLMLQALP.

Positions 25–103 (SLHRMFDIVG…RHDLLPYVTL (79 aa)) constitute a DED domain. The tract at residues 128 to 191 (PRALSDPEPR…SVTPDPKEKQ (64 aa)) is disordered.

Interacts with CASP8, CASP10, KRT8, KRT18, CASP3 and FADD. Homodimerizes and heterodimerizes with DEDD2. In terms of processing, exists predominantly in a mono- or diubiquitinated form. As to expression, widely expressed with highest levels in testis. Within the testis, highly expressed in germ cells but not expressed in Sertoli cells.

Its subcellular location is the cytoplasm. It is found in the nucleus. It localises to the nucleolus. Functionally, a scaffold protein that directs CASP3 to certain substrates and facilitates their ordered degradation during apoptosis. May also play a role in mediating CASP3 cleavage of KRT18. Regulates degradation of intermediate filaments during apoptosis. May play a role in the general transcription machinery in the nucleus and might be an important regulator of the activity of GTF3C3. Inhibits DNA transcription in vitro. This Rattus norvegicus (Rat) protein is Death effector domain-containing protein (Dedd).